Consider the following 337-residue polypeptide: Phenylalanine--tRNA ligase alpha subunit (337 aa).

E258 is a binding site for Mg(2+).

This sequence belongs to the class-II aminoacyl-tRNA synthetase family. Phe-tRNA synthetase alpha subunit type 1 subfamily. In terms of assembly, tetramer of two alpha and two beta subunits. It depends on Mg(2+) as a cofactor.

The protein resides in the cytoplasm. It carries out the reaction tRNA(Phe) + L-phenylalanine + ATP = L-phenylalanyl-tRNA(Phe) + AMP + diphosphate + H(+). The sequence is that of Phenylalanine--tRNA ligase alpha subunit from Paraburkholderia phytofirmans (strain DSM 17436 / LMG 22146 / PsJN) (Burkholderia phytofirmans).